A 1044-amino-acid chain; its full sequence is AT-rich interactive domain-containing protein 5B (1044 aa).

Disordered regions lie at residues P143–C211, R301–D350, M363–D392, N554–E591, Q603–S672, S733–S767, V811–E835, and T884–E912. Basic and acidic residues-rich tracts occupy residues V197–C211, R301–P310, and R337–D350. One can recognise an ARID domain in the interval R212–K304. Polar residues predominate over residues K369–Q380. Residues V565 to E591 are compositionally biased toward low complexity. 3 stretches are compositionally biased toward basic and acidic residues: residues R611–H635, P644–E660, and S733–E746. Positions L752–S767 are enriched in low complexity. Basic and acidic residues-rich tracts occupy residues K816–E826 and L894–K909.

This sequence belongs to the ARID5B family.

It is found in the nucleus. Its function is as follows. Transcription coactivator that binds to the 5'-AATA[CT]-3' core sequence and plays a key role in adipogenesis and liver development. Required for adipogenesis: regulates triglyceride metabolism in adipocytes by regulating expression of adipogenic genes. This is AT-rich interactive domain-containing protein 5B (arid5b) from Danio rerio (Zebrafish).